A 552-amino-acid polypeptide reads, in one-letter code: Leucine-rich repeat-containing protein 31 (552 aa).

Residues 1–65 (MSQTRKKTSS…SETAKPLSSE (65 aa)) form a disordered region. The segment covering 31 to 41 (ESRKEDNDLKT) has biased composition (basic and acidic residues). A compositionally biased stretch (polar residues) spans 42–58 (SDSQPSDWIQKTATSET). 9 LRR repeats span residues 227-246 (SLEV…LNSI), 255-275 (NLKV…KILD), 283-293 (ELRKLDLSCNK), 311-331 (HLQV…MSLT), 339-360 (NLQE…NLLS), 367-387 (ALKS…TALA), 395-415 (ALEV…KLLL), 423-443 (SLQV…ALLA), and 453-475 (KLQK…MFCQ).

The chain is Leucine-rich repeat-containing protein 31 (LRRC31) from Homo sapiens (Human).